A 399-amino-acid chain; its full sequence is Trimethyllysine dioxygenase (399 aa).

Fe cation contacts are provided by His214, Asp216, and His360.

Belongs to the gamma-BBH/TMLD family. Fe(2+) serves as cofactor. It depends on L-ascorbate as a cofactor.

It localises to the cytoplasm. It catalyses the reaction N(6),N(6),N(6)-trimethyl-L-lysine + 2-oxoglutarate + O2 = (3S)-3-hydroxy-N(6),N(6),N(6)-trimethyl-L-lysine + succinate + CO2. Its pathway is amine and polyamine biosynthesis; carnitine biosynthesis. Converts trimethyllysine (TML) into hydroxytrimethyllysine (HTML). This is Trimethyllysine dioxygenase from Meyerozyma guilliermondii (strain ATCC 6260 / CBS 566 / DSM 6381 / JCM 1539 / NBRC 10279 / NRRL Y-324) (Yeast).